Consider the following 599-residue polypeptide: MTTQVPPSALLPLNPEQLARLQAATTDLTPTQLAWVSGYFWGVLNQQPAALAATPAPAAEMPGITIISASQTGNARRVAEALRDDLLTAKLNVKLVNAGDYKFKQIASEKLLIVVTSTQGEGEPPEEAVALHKFLFSKKAPKLENTAFAVFSLGDSSYEFFCQSGKDFDSKLAELGGERLLDRVDADVEYQTAASEWRARVVDALKSRAPVAAPSQSVATGAVNEIHTSPYSKDSPLVASLSVNQKITGRNSEKDVRHIEIDLGDSGLRYQPGDALGVWYQNDPALVKELVELLWLKGDEPVTVEGKTLPLNEALQWHFELTVNTANIVENYATLTRSETLLPLVGDKAKLQHYAATTPIVDMVRFSPAQLDAEALINLLRPLTPRLYSIASSQAEVENEVHVTVGVVRYDVEGRARAGGASSFLADRVEEEGEVRVFIEHNDNFRLPANPETPVIMIGPGTGIAPFRAFMQQRAADEAPGKNWLFFGNPHFTEDFLYQVEWQRYVKEGVLTRIDLAWSRDQKEKVYVQDKLREQGAELWRWINDGAHIYVCGDANRMAKDVEQALLEVIAEFGGMDTEAADEFLSELRVERRYQRDVY.

The Flavodoxin-like domain occupies 64–202 (ITIISASQTG…AASEWRARVV (139 aa)). FMN is bound by residues 70–75 (SQTGNA), 117–120 (STQG), and 153–162 (LGDSSYEFFC). Positions 234 to 448 (DSPLVASLSV…IEHNDNFRLP (215 aa)) constitute an FAD-binding FR-type domain. Residues threonine 322, alanine 356, 386 to 389 (RLYS), 404 to 406 (TVG), tyrosine 410, and 419 to 422 (GGAS) contribute to the FAD site. NADP(+) is bound by residues 519–520 (SR), 525–529 (KVYVQ), and aspartate 561. Tyrosine 599 contributes to the FAD binding site.

The protein belongs to the NADPH-dependent sulphite reductase flavoprotein subunit CysJ family. This sequence in the N-terminal section; belongs to the flavodoxin family. It in the C-terminal section; belongs to the flavoprotein pyridine nucleotide cytochrome reductase family. In terms of assembly, alpha(8)-beta(8). The alpha component is a flavoprotein, the beta component is a hemoprotein. The cofactor is FAD. FMN serves as cofactor.

It catalyses the reaction hydrogen sulfide + 3 NADP(+) + 3 H2O = sulfite + 3 NADPH + 4 H(+). It functions in the pathway sulfur metabolism; hydrogen sulfide biosynthesis; hydrogen sulfide from sulfite (NADPH route): step 1/1. Component of the sulfite reductase complex that catalyzes the 6-electron reduction of sulfite to sulfide. This is one of several activities required for the biosynthesis of L-cysteine from sulfate. The flavoprotein component catalyzes the electron flow from NADPH -&gt; FAD -&gt; FMN to the hemoprotein component. This Escherichia coli O9:H4 (strain HS) protein is Sulfite reductase [NADPH] flavoprotein alpha-component.